The chain runs to 258 residues: Lipoprotein-releasing system ATP-binding protein LolD (258 aa).

Positions 5-244 (LQCCQLSKSY…PTSSITDPAN (240 aa)) constitute an ABC transporter domain. ATP is bound at residue 41–48 (GSSGCGKS). Residues 222–258 (LRPLSDNSEQALPPTSSITDPANNIKDNEPQANERHV) are disordered. Positions 226–243 (SDNSEQALPPTSSITDPA) are enriched in polar residues. The segment covering 247–258 (KDNEPQANERHV) has biased composition (basic and acidic residues).

It belongs to the ABC transporter superfamily. Lipoprotein translocase (TC 3.A.1.125) family. As to quaternary structure, the complex is composed of two ATP-binding proteins (LolD) and two transmembrane proteins (LolC and LolE).

The protein localises to the cell inner membrane. Functionally, part of the ABC transporter complex LolCDE involved in the translocation of mature outer membrane-directed lipoproteins, from the inner membrane to the periplasmic chaperone, LolA. Responsible for the formation of the LolA-lipoprotein complex in an ATP-dependent manner. The sequence is that of Lipoprotein-releasing system ATP-binding protein LolD from Colwellia psychrerythraea (strain 34H / ATCC BAA-681) (Vibrio psychroerythus).